The sequence spans 465 residues: Cysteine--tRNA ligase (465 aa).

Position 29 (C29) interacts with Zn(2+). Positions 31-41 (PTVYNYIHIGN) match the 'HIGH' region motif. Zn(2+)-binding residues include C209, H234, and E238. The short motif at 266-270 (KMSKS) is the 'KMSKS' region element. K269 is an ATP binding site. S270 carries the post-translational modification Phosphoserine.

This sequence belongs to the class-I aminoacyl-tRNA synthetase family. Monomer. Zn(2+) serves as cofactor.

It localises to the cytoplasm. The catalysed reaction is tRNA(Cys) + L-cysteine + ATP = L-cysteinyl-tRNA(Cys) + AMP + diphosphate. This chain is Cysteine--tRNA ligase, found in Bacillus anthracis (strain A0248).